Consider the following 144-residue polypeptide: 3-dehydroquinate dehydratase (144 aa).

Tyr-24 (proton acceptor) is an active-site residue. The substrate site is built by Asn-76, His-82, and Asp-89. Residue His-102 is the Proton donor of the active site. Substrate contacts are provided by residues 103-104 (LS) and Arg-113.

Belongs to the type-II 3-dehydroquinase family. Homododecamer.

It catalyses the reaction 3-dehydroquinate = 3-dehydroshikimate + H2O. The protein operates within metabolic intermediate biosynthesis; chorismate biosynthesis; chorismate from D-erythrose 4-phosphate and phosphoenolpyruvate: step 3/7. Catalyzes a trans-dehydration via an enolate intermediate. The protein is 3-dehydroquinate dehydratase of Bordetella avium (strain 197N).